Consider the following 602-residue polypeptide: Elongation factor 4 (602 aa).

The tr-type G domain maps to 7 to 189; that stretch reads KYIRNFCIIA…KIVDMIPCPE (183 aa). GTP-binding positions include 19-24 and 136-139; these read DHGKST and NKID.

Belongs to the TRAFAC class translation factor GTPase superfamily. Classic translation factor GTPase family. LepA subfamily.

The protein localises to the cell membrane. The catalysed reaction is GTP + H2O = GDP + phosphate + H(+). Its function is as follows. Required for accurate and efficient protein synthesis under certain stress conditions. May act as a fidelity factor of the translation reaction, by catalyzing a one-codon backward translocation of tRNAs on improperly translocated ribosomes. Back-translocation proceeds from a post-translocation (POST) complex to a pre-translocation (PRE) complex, thus giving elongation factor G a second chance to translocate the tRNAs correctly. Binds to ribosomes in a GTP-dependent manner. This Ruminiclostridium cellulolyticum (strain ATCC 35319 / DSM 5812 / JCM 6584 / H10) (Clostridium cellulolyticum) protein is Elongation factor 4.